The chain runs to 131 residues: Arsenate reductase (131 aa).

Active-site nucleophile residues include cysteine 10, cysteine 82, and cysteine 89. 2 disulfides stabilise this stretch: cysteine 10–cysteine 82 and cysteine 82–cysteine 89.

The protein belongs to the low molecular weight phosphotyrosine protein phosphatase family. Thioredoxin-coupled ArsC subfamily.

Its subcellular location is the cytoplasm. The enzyme catalyses arsenate + [thioredoxin]-dithiol + H(+) = arsenite + [thioredoxin]-disulfide + H2O. Its function is as follows. Catalyzes the reduction of arsenate [As(V)] to arsenite [As(III)]. The polypeptide is Arsenate reductase (Staphylococcus aureus (strain bovine RF122 / ET3-1)).